The primary structure comprises 240 residues: Ribosomal RNA small subunit methyltransferase G (240 aa).

Residues glycine 79, phenylalanine 84, 130-131 (AE), and arginine 149 each bind S-adenosyl-L-methionine.

It belongs to the methyltransferase superfamily. RNA methyltransferase RsmG family.

Its subcellular location is the cytoplasm. Specifically methylates the N7 position of a guanine in 16S rRNA. In Lactobacillus acidophilus (strain ATCC 700396 / NCK56 / N2 / NCFM), this protein is Ribosomal RNA small subunit methyltransferase G.